The chain runs to 694 residues: Follicle-stimulating hormone receptor (694 aa).

The N-terminal stretch at 1 to 17 (MAFLWISFLVFLGSGSG) is a signal peptide. Disulfide bonds link Cys-18/Cys-25 and Cys-23/Cys-32. The LRRNT domain occupies 18–46 (CHHRICHCSDRVFICQESKVTEIPSDIPR). Over 18 to 367 (CHHRICHCSD…EDIMGYNFLR (350 aa)) the chain is Extracellular. LRR repeat units lie at residues 49 to 72 (VEMR…FRDL), 73 to 97 (EKIE…LPKL), 98 to 118 (HEIR…AFWN), 119 to 143 (LPNL…KIQS), 144 to 169 (HQKV…AGLS), 170 to 192 (SESE…AFNG), 193 to 216 (TQLD…IFQG), 217 to 240 (ANGP…GLKN), and 241 to 259 (LKKL…PNLD). N-linked (GlcNAc...) asparagine glycans are attached at residues Asn-191 and Asn-199. N-linked (GlcNAc...) asparagine glycosylation occurs at Asn-268. 4 disulfide bridges follow: Cys-275–Cys-347, Cys-276–Cys-292, Cys-276–Cys-357, and Cys-292–Cys-339. The N-linked (GlcNAc...) asparagine glycan is linked to Asn-293. Tyr-336 is subject to Sulfotyrosine. The chain crosses the membrane as a helical span at residues 368 to 388 (VLIWFISILSITGNIVVLVIL). The Cytoplasmic portion of the chain corresponds to 389–399 (ITSQYKLTVPR). The chain crosses the membrane as a helical span at residues 400 to 422 (FLMCNLAFADLCIGIYLLLIASV). Topologically, residues 423 to 444 (DIHTKSQYHNYAIDWQTGAGCD) are extracellular. A disulfide bond links Cys-443 and Cys-518. The helical transmembrane segment at 445–466 (AAGFFTVFASELSVYTLTAITL) threads the bilayer. Residues 467-486 (ERWHTITYAMQLDRKVRLRH) are Cytoplasmic-facing. The chain crosses the membrane as a helical span at residues 487-509 (AASIMLIGWIFAFSVALLPIFGV). The Extracellular segment spans residues 510–529 (SSYMKVSICLPMDIDSPLSQ). Residues 530–551 (FYVISLLVLNVLASVIICTCYT) traverse the membrane as a helical segment. Residues 552 to 574 (HIYFTVRNPNIISSTSDAKIAKR) are Cytoplasmic-facing. Residues 575–598 (MAMLIFTDFLCMAPISFFAISASV) traverse the membrane as a helical segment. Residues 599–609 (KMPLITVSKSK) lie on the Extracellular side of the membrane. Residues 610 to 631 (ILLVLFYPINSCANPFLYAVFT) traverse the membrane as a helical segment. The Cytoplasmic segment spans residues 632–694 (KTFRRDFFIL…YKLVPLNHLS (63 aa)).

It belongs to the G-protein coupled receptor 1 family. FSH/LSH/TSH subfamily. As to quaternary structure, homotrimer. Functions as a homotrimer binding the FSH hormone heterodimer composed of CGA and FSHB. Interacts with ARRB2. Interacts with APPL2; interaction is independent of follicle stimulating hormone stimulation. Post-translationally, N-glycosylated; indirectly required for FSH-binding, possibly via a conformational change that allows high affinity binding of hormone. Sulfated.

It is found in the cell membrane. G protein-coupled receptor for follitropin, the follicle-stimulating hormone. Through cAMP production activates the downstream PI3K-AKT and ERK1/ERK2 signaling pathways. The protein is Follicle-stimulating hormone receptor (FSHR) of Notamacropus eugenii (Tammar wallaby).